Here is a 264-residue protein sequence, read N- to C-terminus: uncharacterized protein (264 aa).

Residues 1–20 (MENIEKKCQPETINEDNNDE) form a disordered region.

Belongs to the mimivirus R73/L269/L862 family.

This is an uncharacterized protein from Acanthamoeba polyphaga mimivirus (APMV).